The following is a 273-amino-acid chain: Putative pyruvate, phosphate dikinase regulatory protein (273 aa).

ADP is bound at residue 153 to 160 (GISRTSKT).

The protein belongs to the pyruvate, phosphate/water dikinase regulatory protein family. PDRP subfamily.

The enzyme catalyses N(tele)-phospho-L-histidyl/L-threonyl-[pyruvate, phosphate dikinase] + ADP = N(tele)-phospho-L-histidyl/O-phospho-L-threonyl-[pyruvate, phosphate dikinase] + AMP + H(+). The catalysed reaction is N(tele)-phospho-L-histidyl/O-phospho-L-threonyl-[pyruvate, phosphate dikinase] + phosphate + H(+) = N(tele)-phospho-L-histidyl/L-threonyl-[pyruvate, phosphate dikinase] + diphosphate. Functionally, bifunctional serine/threonine kinase and phosphorylase involved in the regulation of the pyruvate, phosphate dikinase (PPDK) by catalyzing its phosphorylation/dephosphorylation. In Rhizobium etli (strain CIAT 652), this protein is Putative pyruvate, phosphate dikinase regulatory protein.